A 743-amino-acid polypeptide reads, in one-letter code: Elongation factor 2 (743 aa).

Residues 19–265 (NNIRNIGIIA…MVVRHLPSPK (247 aa)) form the tr-type G domain. GTP is bound by residues 28-35 (AHIHHGKT), 94-98 (DTPGH), and 148-151 (NKVD). Position 615 is a diphthamide (His615).

The protein belongs to the TRAFAC class translation factor GTPase superfamily. Classic translation factor GTPase family. EF-G/EF-2 subfamily.

The protein resides in the cytoplasm. In terms of biological role, catalyzes the GTP-dependent ribosomal translocation step during translation elongation. During this step, the ribosome changes from the pre-translocational (PRE) to the post-translocational (POST) state as the newly formed A-site-bound peptidyl-tRNA and P-site-bound deacylated tRNA move to the P and E sites, respectively. Catalyzes the coordinated movement of the two tRNA molecules, the mRNA and conformational changes in the ribosome. The polypeptide is Elongation factor 2 (Nanoarchaeum equitans (strain Kin4-M)).